A 301-amino-acid polypeptide reads, in one-letter code: Probable alpha-L-glutamate ligase 1 (301 aa).

Residues 104–287 enclose the ATP-grasp domain; that stretch reads MQLMSRRGIG…VAGAIIDFVE (184 aa). Residues Lys141, 178–179, Asp187, and 211–213 contribute to the ATP site; these read EY and RSN. The Mg(2+) site is built by Asp248, Glu260, and Asn262. Residues Asp248, Glu260, and Asn262 each coordinate Mn(2+).

The protein belongs to the RimK family. The cofactor is Mg(2+). Mn(2+) serves as cofactor.

The polypeptide is Probable alpha-L-glutamate ligase 1 (Shewanella baltica (strain OS185)).